The chain runs to 20 residues: Unknown protein NF040 from 2D-PAGE (20 aa).

One can recognise a TCTP domain in the interval M1–M20.

This sequence belongs to the TCTP family.

The protein is Unknown protein NF040 from 2D-PAGE of Naegleria fowleri (Brain eating amoeba).